The chain runs to 234 residues: MADQTHVLFVEDDDVIREATQLALERDGFAVTAMPDGLSGLESFRADRPDIALLDVMLPGLDGVSLCRRIRDESTVPVIMLSARADSIDVVLGLEAGADDYVTKPFDGAVLVARIRAVLRRFGHAGGGDRTEGAGAAETGGVLTFGDLEVDTDGMEVRRAGRPVGLTPTEMRLLLEFSSAPGTVLSRDKLLERVWDYGWGGDTRVVDVHVQRLRTKIGQDRIETVRGFGYKLKA.

A Response regulatory domain is found at 6–119 (HVLFVEDDDV…VLVARIRAVL (114 aa)). A 4-aspartylphosphate modification is found at D55. Positions 140-234 (GGVLTFGDLE…VRGFGYKLKA (95 aa)) form a DNA-binding region, ompR/PhoB-type.

In terms of processing, phosphorylated by CseC.

The protein localises to the cytoplasm. Functionally, member of the two-component regulatory system CseB/CseC involved in the stability of the cell envelope. CseB activates transcription of RNA polymerase sigma-E factor, in response to changes in the cell envelope. The chain is Transcriptional regulatory protein CseB (cseB) from Streptomyces coelicolor (strain ATCC BAA-471 / A3(2) / M145).